A 130-amino-acid polypeptide reads, in one-letter code: Cholecystokinin (130 aa).

The signal sequence occupies residues 1–20 (MYSGICIYMFLAMLSTSSSG). The propeptide occupies 21–60 (QQATGSHNENPVATELEQSLTEHHRHVRVPSSAGQLKPIQ). Tyr-112 bears the Sulfotyrosine mark. Phe-118 carries the post-translational modification Phenylalanine amide. A propeptide spanning residues 122 to 130 (SAEEYEYSS) is cleaved from the precursor. Sulfotyrosine occurs at positions 126 and 128.

This sequence belongs to the gastrin/cholecystokinin family. The precursor is cleaved by proteases to produce a number of active cholecystokinins. In terms of tissue distribution, expressed in brain, duodenum and small intestine.

The protein resides in the secreted. Functionally, this peptide hormone induces gall bladder contraction and the release of pancreatic enzymes in the gut. Its function in the brain is not clear. The protein is Cholecystokinin of Trachemys scripta (Red-eared slider turtle).